Reading from the N-terminus, the 337-residue chain is Glyceraldehyde-3-phosphate dehydrogenase 1 (337 aa).

Residues 12–13 (RI), aspartate 34, and methionine 79 contribute to the NAD(+) site. D-glyceraldehyde 3-phosphate-binding positions include 151–153 (SCT), threonine 182, 211–212 (TG), and arginine 234. The active-site Nucleophile is cysteine 152. Asparagine 316 is an NAD(+) binding site.

Belongs to the glyceraldehyde-3-phosphate dehydrogenase family. As to quaternary structure, homotetramer.

Its subcellular location is the cytoplasm. It carries out the reaction D-glyceraldehyde 3-phosphate + phosphate + NAD(+) = (2R)-3-phospho-glyceroyl phosphate + NADH + H(+). Its pathway is carbohydrate degradation; glycolysis; pyruvate from D-glyceraldehyde 3-phosphate: step 1/5. This chain is Glyceraldehyde-3-phosphate dehydrogenase 1 (GAP1), found in Giardia intestinalis (Giardia lamblia).